A 402-amino-acid chain; its full sequence is NADH-quinone oxidoreductase subunit D (402 aa).

It belongs to the complex I 49 kDa subunit family. In terms of assembly, NDH-1 is composed of 14 different subunits. Subunits NuoB, C, D, E, F, and G constitute the peripheral sector of the complex.

The protein resides in the cell inner membrane. The catalysed reaction is a quinone + NADH + 5 H(+)(in) = a quinol + NAD(+) + 4 H(+)(out). NDH-1 shuttles electrons from NADH, via FMN and iron-sulfur (Fe-S) centers, to quinones in the respiratory chain. The immediate electron acceptor for the enzyme in this species is believed to be ubiquinone. Couples the redox reaction to proton translocation (for every two electrons transferred, four hydrogen ions are translocated across the cytoplasmic membrane), and thus conserves the redox energy in a proton gradient. The polypeptide is NADH-quinone oxidoreductase subunit D (Rhodopseudomonas palustris (strain TIE-1)).